A 204-amino-acid polypeptide reads, in one-letter code: Thioredoxin-like 4, chloroplastic (204 aa).

A chloroplast-targeting transit peptide spans 1–27; it reads MSSLLNISHCSYHGYSGLTSRGGINTV. One can recognise a Thioredoxin domain in the interval 63–201; that stretch reads AKSLSQENLV…IDAAILKYTS (139 aa). Residues Cys119 and Cys122 each act as nucleophile in the active site. A disulfide bridge connects residues Cys119 and Cys122.

Belongs to the thioredoxin family.

The protein resides in the plastid. Its subcellular location is the chloroplast. Its function is as follows. Probable thiol-disulfide oxidoreductase that may participate in various redox reactions. The sequence is that of Thioredoxin-like 4, chloroplastic from Arabidopsis thaliana (Mouse-ear cress).